The sequence spans 159 residues: 6,7-dimethyl-8-ribityllumazine synthase (159 aa).

Residues tryptophan 26, 57-59 (ALE), and 79-81 (CVI) each bind 5-amino-6-(D-ribitylamino)uracil. 84–85 (GT) provides a ligand contact to (2S)-2-hydroxy-3-oxobutyl phosphate. Histidine 87 functions as the Proton donor in the catalytic mechanism. Asparagine 112 provides a ligand contact to 5-amino-6-(D-ribitylamino)uracil. Residue arginine 126 participates in (2S)-2-hydroxy-3-oxobutyl phosphate binding.

This sequence belongs to the DMRL synthase family.

It catalyses the reaction (2S)-2-hydroxy-3-oxobutyl phosphate + 5-amino-6-(D-ribitylamino)uracil = 6,7-dimethyl-8-(1-D-ribityl)lumazine + phosphate + 2 H2O + H(+). Its pathway is cofactor biosynthesis; riboflavin biosynthesis; riboflavin from 2-hydroxy-3-oxobutyl phosphate and 5-amino-6-(D-ribitylamino)uracil: step 1/2. Functionally, catalyzes the formation of 6,7-dimethyl-8-ribityllumazine by condensation of 5-amino-6-(D-ribitylamino)uracil with 3,4-dihydroxy-2-butanone 4-phosphate. This is the penultimate step in the biosynthesis of riboflavin. The protein is 6,7-dimethyl-8-ribityllumazine synthase of Corynebacterium efficiens (strain DSM 44549 / YS-314 / AJ 12310 / JCM 11189 / NBRC 100395).